The sequence spans 212 residues: Imidazole glycerol phosphate synthase subunit HisH 2 (212 aa).

Positions 4-211 constitute a Glutamine amidotransferase type-1 domain; sequence HLGLIDYGMG…LDWLQRGAPI (208 aa). The active-site Nucleophile is cysteine 82. Catalysis depends on residues histidine 186 and glutamate 188.

Heterodimer of HisH and HisF.

Its subcellular location is the cytoplasm. The enzyme catalyses 5-[(5-phospho-1-deoxy-D-ribulos-1-ylimino)methylamino]-1-(5-phospho-beta-D-ribosyl)imidazole-4-carboxamide + L-glutamine = D-erythro-1-(imidazol-4-yl)glycerol 3-phosphate + 5-amino-1-(5-phospho-beta-D-ribosyl)imidazole-4-carboxamide + L-glutamate + H(+). The catalysed reaction is L-glutamine + H2O = L-glutamate + NH4(+). The protein operates within amino-acid biosynthesis; L-histidine biosynthesis; L-histidine from 5-phospho-alpha-D-ribose 1-diphosphate: step 5/9. Functionally, IGPS catalyzes the conversion of PRFAR and glutamine to IGP, AICAR and glutamate. The HisH subunit provides the glutamine amidotransferase activity that produces the ammonia necessary to HisF for the synthesis of IGP and AICAR. This chain is Imidazole glycerol phosphate synthase subunit HisH 2 (hisH2), found in Parasynechococcus marenigrum (strain WH8102).